The following is a 276-amino-acid chain: Undecaprenyl-diphosphatase (276 aa).

A run of 5 helical transmembrane segments spans residues 84-104, 115-135, 188-208, 222-242, and 250-270; these read YRLGWYVIIGTIPICVLGLLF, LWVVATALVVFSGVIALAEYL, FGFLLAIPAVFASGLFSLPDA, QLLVATLIAFVVGLAAVSWFL, and MYWFVGYRVVVGVVVLILLAT.

The protein belongs to the UppP family.

Its subcellular location is the cell membrane. The catalysed reaction is di-trans,octa-cis-undecaprenyl diphosphate + H2O = di-trans,octa-cis-undecaprenyl phosphate + phosphate + H(+). In terms of biological role, catalyzes the dephosphorylation of undecaprenyl diphosphate (UPP). Confers resistance to bacitracin. This Mycobacterium ulcerans (strain Agy99) protein is Undecaprenyl-diphosphatase.